A 323-amino-acid polypeptide reads, in one-letter code: uncharacterized protein (323 aa).

Residues 1-45 (MLATLSQIRAWSTEHLIDAAGYWTETADRWEDVFLQMRNQAHAIA) form the signal peptide. Residues 186–227 (FKQDGPTPPPPGAPHPSGGADGPYSDPITSMMLPPAGTEAPV) form a disordered region. Transmembrane regions (helical) follow at residues 269 to 289 (SAEW…VVGT) and 290 to 310 (ALAI…LLGV).

It localises to the cell membrane. This is an uncharacterized protein from Mycobacterium tuberculosis (strain CDC 1551 / Oshkosh).